Reading from the N-terminus, the 316-residue chain is tRNA dimethylallyltransferase (316 aa).

17–24 (GPTASGKT) serves as a coordination point for ATP. 19 to 24 (TASGKT) lines the substrate pocket. Interaction with substrate tRNA regions lie at residues 42-45 (DSAL), 166-170 (QRLSR), and 247-252 (RCVGYR).

This sequence belongs to the IPP transferase family. As to quaternary structure, monomer. Requires Mg(2+) as cofactor.

It catalyses the reaction adenosine(37) in tRNA + dimethylallyl diphosphate = N(6)-dimethylallyladenosine(37) in tRNA + diphosphate. Its function is as follows. Catalyzes the transfer of a dimethylallyl group onto the adenine at position 37 in tRNAs that read codons beginning with uridine, leading to the formation of N6-(dimethylallyl)adenosine (i(6)A). The sequence is that of tRNA dimethylallyltransferase from Citrobacter koseri (strain ATCC BAA-895 / CDC 4225-83 / SGSC4696).